The sequence spans 199 residues: CASP-like protein 1B2 (199 aa).

The Cytoplasmic segment spans residues 1-22; the sequence is MALQSEEKLEVGYSSLQPKTRK. A helical membrane pass occupies residues 23 to 43; that stretch reads WVLLMLRVLAFFATAAATVVM. Residues 44-74 are Extracellular-facing; that stretch reads GLNKETKTLVVATVGSTPIKASLAAKFQHTP. Residues 75–95 traverse the membrane as a helical segment; sequence AFVFFVIANGLASIHNLVMIM. Residues 96–112 lie on the Cytoplasmic side of the membrane; the sequence is GDLFGQKLDYKGLRLAM. The helical transmembrane segment at 113-133 threads the bilayer; the sequence is IAILDMMTVALVSGGVSAAAF. Residues 134–163 are Extracellular-facing; it reads MAELGKNGNSHARWNKICDKFETFCDHGGG. A helical transmembrane segment spans residues 164–184; the sequence is ALIASFAGLILMLIISVMSII. The Cytoplasmic segment spans residues 185–199; the sequence is KLLIKPKPDSTIVVP.

It belongs to the Casparian strip membrane proteins (CASP) family. In terms of assembly, homodimer and heterodimers.

Its subcellular location is the cell membrane. This chain is CASP-like protein 1B2, found in Populus trichocarpa (Western balsam poplar).